The chain runs to 131 residues: Anaerobic and virulence modulator AnvM (131 aa).

Its function is as follows. Plays an essential role by modulating the expression of hundreds of genes including quorum sensing system genes and oxidative stress resistance genes under both aerobic and anaerobic conditions. The sequence is that of Anaerobic and virulence modulator AnvM from Pseudomonas aeruginosa (strain ATCC 15692 / DSM 22644 / CIP 104116 / JCM 14847 / LMG 12228 / 1C / PRS 101 / PAO1).